A 248-amino-acid polypeptide reads, in one-letter code: Trypsin I-P38 (248 aa).

A signal peptide spans 1-15 (MKFLVLVAFLGVAVA). Residues 16 to 25 (FPISDEDDDK) constitute a propeptide, activation peptide. The 221-residue stretch at 26–246 (IVGGYSCARS…YVSWIKTTMS (221 aa)) folds into the Peptidase S1 domain. 6 cysteine pairs are disulfide-bonded: C32–C162, C50–C66, C134–C235, C141–C208, C173–C187, and C198–C222. The active-site Charge relay system is the H65. Ca(2+) is bound by residues E77, N79, and E87. D109 (charge relay system) is an active-site residue. The Charge relay system role is filled by S202.

This sequence belongs to the peptidase S1 family. The cofactor is Ca(2+). High levels are seen in the pancreas while lower levels are found in the liver, spleen and thymus.

Its subcellular location is the secreted. The protein localises to the extracellular space. The enzyme catalyses Preferential cleavage: Arg-|-Xaa, Lys-|-Xaa.. The sequence is that of Trypsin I-P38 from Gallus gallus (Chicken).